A 248-amino-acid chain; its full sequence is Aspartate/glutamate leucyltransferase (248 aa).

Belongs to the R-transferase family. Bpt subfamily.

The protein resides in the cytoplasm. The catalysed reaction is N-terminal L-glutamyl-[protein] + L-leucyl-tRNA(Leu) = N-terminal L-leucyl-L-glutamyl-[protein] + tRNA(Leu) + H(+). It carries out the reaction N-terminal L-aspartyl-[protein] + L-leucyl-tRNA(Leu) = N-terminal L-leucyl-L-aspartyl-[protein] + tRNA(Leu) + H(+). In terms of biological role, functions in the N-end rule pathway of protein degradation where it conjugates Leu from its aminoacyl-tRNA to the N-termini of proteins containing an N-terminal aspartate or glutamate. The chain is Aspartate/glutamate leucyltransferase from Methylobacillus flagellatus (strain ATCC 51484 / DSM 6875 / VKM B-1610 / KT).